Here is a 252-residue protein sequence, read N- to C-terminus: tRNA pseudouridine synthase A (252 aa).

The Nucleophile role is filled by Asp52. Substrate is bound at residue Tyr110.

The protein belongs to the tRNA pseudouridine synthase TruA family. As to quaternary structure, homodimer.

It carries out the reaction uridine(38/39/40) in tRNA = pseudouridine(38/39/40) in tRNA. Functionally, formation of pseudouridine at positions 38, 39 and 40 in the anticodon stem and loop of transfer RNAs. The polypeptide is tRNA pseudouridine synthase A (Blochmanniella floridana).